A 121-amino-acid chain; its full sequence is Holo-[acyl-carrier-protein] synthase (121 aa).

Positions 8 and 58 each coordinate Mg(2+).

It belongs to the P-Pant transferase superfamily. AcpS family. It depends on Mg(2+) as a cofactor.

It is found in the cytoplasm. It carries out the reaction apo-[ACP] + CoA = holo-[ACP] + adenosine 3',5'-bisphosphate + H(+). Functionally, transfers the 4'-phosphopantetheine moiety from coenzyme A to a Ser of acyl-carrier-protein. This is Holo-[acyl-carrier-protein] synthase from Bacillus pumilus (strain SAFR-032).